We begin with the raw amino-acid sequence, 314 residues long: Chlorinase cctP2 (314 aa).

Residues 1–14 (MEGKTSRYQDEAHD) are compositionally biased toward basic and acidic residues. Residues 1 to 24 (MEGKTSRYQDEAHDSAGSFNEETE) are disordered. Short sequence motifs (HXXHC) lie at residues 150–154 (HALHC) and 177–181 (HIEHC).

Belongs to the ustYa family.

It functions in the pathway mycotoxin biosynthesis. Its function is as follows. Chlorinase; part of the gene cluster that mediates the biosynthesis of the mycotoxin cyclochlorotine, a hepatotoxic and carcinogenic cyclic chlorinated pentapeptide. Within the pathway, cctP2 catalyzes the formation of isocyclochlorotine via dichlorination of the Pro from the isocyclotine skeleton. The NRPS cctN initially catalyzes the condensation of L-serine (Ser), Pro, L-2-aminobutyrate (2Abu), Ser, and beta-Phe in this order to produce isocyclotine. After the dichlorination of Pro2 catalyzed by cctP2 to produce isocyclochlorotine, the cctO-mediated transacylation of isocyclochlorotine can furnish cyclochlorotine. The subsequent hydroxylation of cyclochlorotine by cctR yields hydroxycyclochlorotine as the final product. CctP1 probably acts as a phenylalanine aminomutase and provides the uncommon building block beta-Phe. Furthermore, 2Abu can be synthesized from threonine by one of the threonine dehydratases and transaminases localized outside of the cluster. The functions of the remaining proteins encoded by the cluster, cctM and cctT, have not been identified yet. The polypeptide is Chlorinase cctP2 (Talaromyces islandicus (Penicillium islandicum)).